The chain runs to 66 residues: Beta-mammal toxin Co3 (66 aa).

Residues 1–66 (KEGYIVNYYD…VWPLPNKTCN (66 aa)) form the LCN-type CS-alpha/beta domain. 4 disulfide bridges follow: Cys-12–Cys-65, Cys-16–Cys-41, Cys-25–Cys-46, and Cys-29–Cys-48.

Expressed by the venom gland.

The protein localises to the secreted. Its function is as follows. Beta toxins bind voltage-independently at site-4 of sodium channels (Nav) and shift the voltage of activation toward more negative potentials thereby affecting sodium channel activation and promoting spontaneous and repetitive firing. This toxin acts on human Nav1.2/SCN2A, Nav1.4/SCN4A and Nav1.6/SCN8A voltage-gated sodium channels. Also, it reduces the peak of sodium currents in Nav1.5/SCN5A at all potentials. In vivo, is lethal to mice when intraperitoneally injected at a dose of 5ug. No activity is observed when injected into crickets or woodlice. The protein is Beta-mammal toxin Co3 of Centruroides ornatus (Scorpion).